We begin with the raw amino-acid sequence, 288 residues long: Energy-coupling factor transporter ATP-binding protein EcfA2 (288 aa).

One can recognise an ABC transporter domain in the interval 3-246 (IKLEQLGYCY…PDALVDLGLS (244 aa)). An ATP-binding site is contributed by 40–47 (GHTGSGKS).

It belongs to the ABC transporter superfamily. Energy-coupling factor EcfA family. Forms a stable energy-coupling factor (ECF) transporter complex composed of 2 membrane-embedded substrate-binding proteins (S component), 2 ATP-binding proteins (A component) and 2 transmembrane proteins (T component).

It localises to the cell membrane. ATP-binding (A) component of a common energy-coupling factor (ECF) ABC-transporter complex. Unlike classic ABC transporters this ECF transporter provides the energy necessary to transport a number of different substrates. The sequence is that of Energy-coupling factor transporter ATP-binding protein EcfA2 from Listeria welshimeri serovar 6b (strain ATCC 35897 / DSM 20650 / CCUG 15529 / CIP 8149 / NCTC 11857 / SLCC 5334 / V8).